A 464-amino-acid chain; its full sequence is E3 ubiquitin-protein ligase ITT1 (464 aa).

Positions 176–455 are TRIAD supradomain; it reads SNYHCCICME…EAYSGCYGRL (280 aa). Zn(2+) contacts are provided by Cys-180, Cys-183, Cys-207, Cys-210, Cys-290, Cys-300, Cys-316, Cys-319, Cys-402, and Cys-405. The segment at 180–236 adopts an RING-type 1 zinc-finger fold; it reads CCICMEMEKGVRMIKLPCENANVEHYLCRGCAKSYFTAMIQENRISSVRCPQCEYKE. The IBR-type zinc-finger motif lies at 267 to 338; that stretch reads DTELCERYEK…HAWHGYNNKC (72 aa). Residues 402–431 form an RING-type 2; atypical zinc finger; sequence CPKCKVVVERSEGCNKMKCEVCGTLFCFIC. Cys-415 is an active-site residue. Zn(2+) contacts are provided by Cys-420, Cys-423, Cys-428, Cys-431, His-443, and Cys-451.

Belongs to the RBR family. RNF14 subfamily. Interacts with translation release factors eRF1 (SUP45) and eRF3 (SUP35) in vitro.

The catalysed reaction is [E2 ubiquitin-conjugating enzyme]-S-ubiquitinyl-L-cysteine + [acceptor protein]-L-lysine = [E2 ubiquitin-conjugating enzyme]-L-cysteine + [acceptor protein]-N(6)-ubiquitinyl-L-lysine.. It participates in protein modification; protein ubiquitination. Functionally, E3 ubiquitin-protein ligase involved in translation quality control. Involved in the rescue of stalled ribosomes by promoting ubiquitination and degradation of proteins on stalled ribosomes. Specifically required to resolve RNA-protein cross-links caused by reactive aldehydes, which trigger translation stress by stalling ribosomes: acts by catalying 'Lys-6'-linked ubiquitination of RNA-protein cross-links, leading to their degradation. Interacts with the translation termination factors eRF1 (SUP45) and eRF3 (SUP35); overexpression decreases the efficiency of translation termination. The protein is E3 ubiquitin-protein ligase ITT1 of Saccharomyces cerevisiae (strain ATCC 204508 / S288c) (Baker's yeast).